A 323-amino-acid polypeptide reads, in one-letter code: UPF0200/UPF0201 protein AF_1395 (323 aa).

Positions 1–185 are UPF0200; that stretch reads MVLEMKVIAF…EKIRQILLKL (185 aa). 12-19 is an ATP binding site; that stretch reads GYPLSGKS. The interval 186 to 323 is UPF0201; it reads AKNVEIEIRT…GRPVKEIDKL (138 aa).

It in the N-terminal section; belongs to the UPF0200 family. In the C-terminal section; belongs to the UPF0201 family.

This is UPF0200/UPF0201 protein AF_1395 from Archaeoglobus fulgidus (strain ATCC 49558 / DSM 4304 / JCM 9628 / NBRC 100126 / VC-16).